The following is a 34-amino-acid chain: MSDIN-like toxin proprotein 5 (34 aa).

A propeptide spanning residues 1–10 is cleaved from the precursor; that stretch reads MSDINTARLP. The cyclopeptide (Tyr-Pro) cross-link spans 11–20; sequence YVVFMSFIPP. Positions 21 to 34 are excised as a propeptide; the sequence is CVNDDIQVVLTRGE.

It belongs to the MSDIN fungal toxin family. Processed by the macrocyclase-peptidase enzyme POPB to yield a toxic cyclic decapeptide. POPB first removes 10 residues from the N-terminus. Conformational trapping of the remaining peptide forces the enzyme to release this intermediate rather than proceed to macrocyclization. The enzyme rebinds the remaining peptide in a different conformation and catalyzes macrocyclization of the N-terminal 10 residues.

Its function is as follows. Probable toxin that belongs to the MSDIN-like toxin family responsible for a large number of food poisoning cases and deaths. This chain is MSDIN-like toxin proprotein 5, found in Amanita bisporigera (Destroying angel).